The sequence spans 373 residues: 3 beta-hydroxysteroid dehydrogenase/Delta 5--&gt;4-isomerase type 1 (373 aa).

NADP(+)-binding positions include 10-15 (GAGGFL), Y155, and K159. K159 serves as the catalytic Proton donor. The helical transmembrane segment at 288–308 (LSLMYWIGFLLEIVSFLLRPI) threads the bilayer.

The protein belongs to the 3-beta-HSD family. In terms of tissue distribution, placenta and skin. Predominantly expressed in mammary gland tissue.

The protein localises to the endoplasmic reticulum membrane. It is found in the mitochondrion membrane. The enzyme catalyses a 3beta-hydroxy-Delta(5)-steroid + NAD(+) = a 3-oxo-Delta(5)-steroid + NADH + H(+). It carries out the reaction pregnenolone + NAD(+) = pregn-5-ene-3,20-dione + NADH + H(+). It catalyses the reaction 3beta-hydroxyandrost-5-en-17-one + NAD(+) = androst-5-ene-3,17-dione + NADH + H(+). The catalysed reaction is androst-5-en-3beta,17beta-diol + NAD(+) = 17beta-hydroxy-androst-5-en-3-one + NADH + H(+). The enzyme catalyses a 3beta-hydroxysteroid + NADP(+) = a 3-oxosteroid + NADPH + H(+). It carries out the reaction 5alpha-androstane-3beta,17beta-diol + NADP(+) = 17beta-hydroxy-5alpha-androstan-3-one + NADPH + H(+). It catalyses the reaction 3beta-hydroxy-5alpha-androstan-17-one + NADP(+) = 5alpha-androstan-3,17-dione + NADPH + H(+). The catalysed reaction is a 3-oxo-Delta(5)-steroid = a 3-oxo-Delta(4)-steroid. The enzyme catalyses pregn-5-ene-3,20-dione = progesterone. It carries out the reaction androst-5-ene-3,17-dione = androst-4-ene-3,17-dione. It catalyses the reaction 17beta-hydroxy-androst-5-en-3-one = testosterone. The catalysed reaction is 5alpha-androstane-3beta,17beta-diol + NAD(+) = 17beta-hydroxy-5alpha-androstan-3-one + NADH + H(+). It participates in steroid hormone biosynthesis. Its pathway is steroid metabolism. In terms of biological role, a bifunctional enzyme responsible for the oxidation and isomerization of 3beta-hydroxy-Delta(5)-steroid precursors to 3-oxo-Delta(4)-steroids, an essential step in steroid hormone biosynthesis. Specifically catalyzes the conversion of pregnenolone to progesterone, 17alpha-hydroxypregnenolone to 17alpha-hydroxyprogesterone, dehydroepiandrosterone (DHEA) to 4-androstenedione, and androstenediol to testosterone. Additionally, catalyzes the interconversion between 3beta-hydroxy and 3-oxo-5alpha-androstane steroids controlling the bioavalability of the active forms. Specifically converts dihydrotestosterone to its inactive form 5alpha-androstanediol, that does not bind androgen receptor/AR. Also converts androstanedione, a precursor of testosterone and estrone, to epiandrosterone. Expected to use NAD(+) as preferred electron donor for the 3beta-hydroxy-steroid dehydrogenase activity and NADPH for the 3-ketosteroid reductase activity. The sequence is that of 3 beta-hydroxysteroid dehydrogenase/Delta 5--&gt;4-isomerase type 1 from Homo sapiens (Human).